A 317-amino-acid polypeptide reads, in one-letter code: tRNA(Met) cytidine acetate ligase (317 aa).

Residues 6–19 (IAEY…HIYQ), glycine 100, asparagine 157, and arginine 182 each bind ATP.

This sequence belongs to the TmcAL family.

Its subcellular location is the cytoplasm. It carries out the reaction cytidine(34) in elongator tRNA(Met) + acetate + ATP = N(4)-acetylcytidine(34) in elongator tRNA(Met) + AMP + diphosphate. In terms of biological role, catalyzes the formation of N(4)-acetylcytidine (ac(4)C) at the wobble position of elongator tRNA(Met), using acetate and ATP as substrates. First activates an acetate ion to form acetyladenylate (Ac-AMP) and then transfers the acetyl group to tRNA to form ac(4)C34. The protein is tRNA(Met) cytidine acetate ligase of Mesomycoplasma hyopneumoniae (strain J / ATCC 25934 / NCTC 10110) (Mycoplasma hyopneumoniae).